The sequence spans 190 residues: Putative transcription factor ovo-like protein 3 (190 aa).

Disordered regions lie at residues 1 to 21 (MPRA…GHLP) and 35 to 65 (SLGG…SAPR). Over residues 41 to 62 (AQQSSSVRDPWTAQPTQGNLTS) the composition is skewed to polar residues. 4 consecutive C2H2-type zinc fingers follow at residues 70 to 92 (LGCP…LKCH), 98 to 120 (HLCR…MRTH), 126 to 149 (FRCS…AKVH), and 165 to 187 (HVCE…RALH).

Belongs to the krueppel C2H2-type zinc-finger protein family.

It localises to the nucleus. In terms of biological role, may act as a transcription regulator. The protein is Putative transcription factor ovo-like protein 3 (OVOL3) of Homo sapiens (Human).